The sequence spans 353 residues: tRNA N6-adenosine threonylcarbamoyltransferase (353 aa).

Residues His109 and His113 each contribute to the Fe cation site. Substrate-binding positions include 136–140, Asp169, Gly182, Asp186, and Asn284; that span reads TVSGG. Asp312 contacts Fe cation.

This sequence belongs to the KAE1 / TsaD family. The cofactor is Fe(2+).

The protein resides in the cytoplasm. It catalyses the reaction L-threonylcarbamoyladenylate + adenosine(37) in tRNA = N(6)-L-threonylcarbamoyladenosine(37) in tRNA + AMP + H(+). In terms of biological role, required for the formation of a threonylcarbamoyl group on adenosine at position 37 (t(6)A37) in tRNAs that read codons beginning with adenine. Is involved in the transfer of the threonylcarbamoyl moiety of threonylcarbamoyl-AMP (TC-AMP) to the N6 group of A37, together with TsaE and TsaB. TsaD likely plays a direct catalytic role in this reaction. This chain is tRNA N6-adenosine threonylcarbamoyltransferase, found in Chlorobaculum tepidum (strain ATCC 49652 / DSM 12025 / NBRC 103806 / TLS) (Chlorobium tepidum).